We begin with the raw amino-acid sequence, 909 residues long: UPF0182 protein H16_A1615 (909 aa).

7 consecutive transmembrane segments (helical) span residues Thr-16–Val-36, Ala-58–Leu-78, Val-114–Leu-134, Trp-169–Gly-189, Ala-205–Leu-225, Val-246–Ala-266, and Ala-281–Phe-301.

The protein belongs to the UPF0182 family.

It localises to the cell membrane. The protein is UPF0182 protein H16_A1615 of Cupriavidus necator (strain ATCC 17699 / DSM 428 / KCTC 22496 / NCIMB 10442 / H16 / Stanier 337) (Ralstonia eutropha).